We begin with the raw amino-acid sequence, 1085 residues long: Phosphorylase b kinase regulatory subunit beta (1085 aa).

Phosphoserine is present on residues serine 10, serine 19, and serine 693. Calmodulin-binding regions lie at residues 760–787 (RVYR…VVDS) and 912–943 (SGRC…ILER). A lipid anchor (S-farnesyl cysteine) is attached at cysteine 1082.

It belongs to the phosphorylase b kinase regulatory chain family. In terms of assembly, hexadecamer of 4 heterotetramers, each composed of alpha, beta, gamma, and delta subunits. Alpha (PHKA1 or PHKA2) and beta (PHKB) are regulatory subunits, gamma (PHKG1 or PHKG2) is the catalytic subunit, and delta is calmodulin. In terms of processing, although the final Cys may be farnesylated, the terminal tripeptide is probably not removed, and the C-terminus is not methylated.

The protein localises to the cell membrane. It functions in the pathway glycan biosynthesis; glycogen metabolism. Its activity is regulated as follows. By phosphorylation of various serine residues. Its function is as follows. Phosphorylase b kinase catalyzes the phosphorylation of serine in certain substrates, including troponin I. The beta chain acts as a regulatory unit and modulates the activity of the holoenzyme in response to phosphorylation. This Mus musculus (Mouse) protein is Phosphorylase b kinase regulatory subunit beta (Phkb).